Consider the following 282-residue polypeptide: 4-diphosphocytidyl-2-C-methyl-D-erythritol kinase (282 aa).

Lys12 is an active-site residue. Pro95 to Ser105 provides a ligand contact to ATP. The active site involves Asp137.

The protein belongs to the GHMP kinase family. IspE subfamily.

It catalyses the reaction 4-CDP-2-C-methyl-D-erythritol + ATP = 4-CDP-2-C-methyl-D-erythritol 2-phosphate + ADP + H(+). It participates in isoprenoid biosynthesis; isopentenyl diphosphate biosynthesis via DXP pathway; isopentenyl diphosphate from 1-deoxy-D-xylulose 5-phosphate: step 3/6. In terms of biological role, catalyzes the phosphorylation of the position 2 hydroxy group of 4-diphosphocytidyl-2C-methyl-D-erythritol. The chain is 4-diphosphocytidyl-2-C-methyl-D-erythritol kinase from Pseudomonas aeruginosa (strain UCBPP-PA14).